The chain runs to 151 residues: Transcriptional regulator MraZ (151 aa).

SpoVT-AbrB domains follow at residues 5-51 and 81-124; these read AHEL…PVAE and AEIL…GREQ.

It belongs to the MraZ family. In terms of assembly, forms oligomers.

It localises to the cytoplasm. The protein resides in the nucleoid. The chain is Transcriptional regulator MraZ from Neisseria meningitidis serogroup C / serotype 2a (strain ATCC 700532 / DSM 15464 / FAM18).